A 464-amino-acid polypeptide reads, in one-letter code: Cysteine--tRNA ligase (464 aa).

Position 29 (Cys-29) interacts with Zn(2+). The short motif at 31 to 41 (PTVYDFAHIGN) is the 'HIGH' region element. Residues Cys-224, His-249, and Glu-253 each contribute to the Zn(2+) site. The 'KMSKS' region signature appears at 282-286 (KMSKS). Lys-285 contributes to the ATP binding site.

The protein belongs to the class-I aminoacyl-tRNA synthetase family. In terms of assembly, monomer. The cofactor is Zn(2+).

Its subcellular location is the cytoplasm. The enzyme catalyses tRNA(Cys) + L-cysteine + ATP = L-cysteinyl-tRNA(Cys) + AMP + diphosphate. The protein is Cysteine--tRNA ligase of Afipia carboxidovorans (strain ATCC 49405 / DSM 1227 / KCTC 32145 / OM5) (Oligotropha carboxidovorans).